A 309-amino-acid chain; its full sequence is Oxidoreductase NAD-binding domain-containing protein 1 (309 aa).

Positions 1 to 14 (MVVVIPRLLRGSLG) are cleaved as a signal peptide. Residues 47-161 (HLERTADVVR…VGGEFFFDPK (115 aa)) enclose the FAD-binding FR-type domain. An NAD(+)-binding site is contributed by 175-180 (GVGINP).

This Bos taurus (Bovine) protein is Oxidoreductase NAD-binding domain-containing protein 1 (OXNAD1).